Here is a 548-residue protein sequence, read N- to C-terminus: Glucan endo-1,3-beta-glucosidase (548 aa).

The segment at residues 1–36 is a signal peptide (tat-type signal); that stretch reads MPHDRKNSSRRAWAALCAAVLAVSGALVGVAAPASA. Residues 37 to 430 are possesses beta-glucanase activity, but is unable to lyse viable cells; that stretch reads VPATIPLTIT…AGTGALRIGS (394 aa). The GH64 domain occupies 38-396; that stretch reads PATIPLTITN…PQAAYIKLDP (359 aa). The active-site Proton donor is glutamate 153. Aspartate 169 serves as the catalytic Proton acceptor. In terms of domain architecture, Ricin B-type lectin spans 422-548; that stretch reads GTGALRIGST…NQTEAQRWTL (127 aa). The segment at 472–548 is essential for the lytic activity, but not for the beta-glucanase function; the sequence is GKCLDVARSG…NQTEAQRWTL (77 aa).

This sequence belongs to the glycosyl hydrolase 64 family. Predicted to be exported by the Tat system. The position of the signal peptide cleavage has been experimentally proven.

It localises to the periplasm. It catalyses the reaction Hydrolysis of (1-&gt;3)-beta-D-glucosidic linkages in (1-&gt;3)-beta-D-glucans.. Its function is as follows. Lysis of cellular walls containing beta-1,3-glucans. Implicated in the defense against fungal pathogens. The chain is Glucan endo-1,3-beta-glucosidase from Cellulosimicrobium cellulans (Arthrobacter luteus).